The chain runs to 105 residues: uncharacterized protein (105 aa).

A disordered region spans residues 58-105 (YRKKKPNHSRDNPRINSNLSTNYAQAKSVERSRSNSLNSGPNPLENAT). Polar residues-rich tracts occupy residues 71–82 (RINSNLSTNYAQ) and 91–105 (SNSLNSGPNPLENAT).

It localises to the mitochondrion. This is an uncharacterized protein from Arabidopsis thaliana (Mouse-ear cress).